The sequence spans 273 residues: Undecaprenyl-diphosphatase (273 aa).

9 consecutive transmembrane segments (helical) span residues M1–V21, P39–F59, L63–P83, L92–L112, L118–L138, G165–L185, F195–L215, A225–I245, and R252–M272.

It belongs to the UppP family.

It is found in the cell inner membrane. It carries out the reaction di-trans,octa-cis-undecaprenyl diphosphate + H2O = di-trans,octa-cis-undecaprenyl phosphate + phosphate + H(+). Functionally, catalyzes the dephosphorylation of undecaprenyl diphosphate (UPP). Confers resistance to bacitracin. The sequence is that of Undecaprenyl-diphosphatase from Desulfosudis oleivorans (strain DSM 6200 / JCM 39069 / Hxd3) (Desulfococcus oleovorans).